The sequence spans 1091 residues: ATP-dependent helicase/deoxyribonuclease subunit B (1091 aa).

Belongs to the helicase family. AddB/RexB type 2 subfamily. Heterodimer of AddA and RexB. It depends on Mg(2+) as a cofactor.

The heterodimer acts as both an ATP-dependent DNA helicase and an ATP-dependent, dual-direction single-stranded exonuclease. Recognizes the chi site generating a DNA molecule suitable for the initiation of homologous recombination. This subunit has 5' -&gt; 3' nuclease activity but not helicase activity. The sequence is that of ATP-dependent helicase/deoxyribonuclease subunit B from Streptococcus pneumoniae (strain CGSP14).